Reading from the N-terminus, the 201-residue chain is Recombination protein RecR (201 aa).

The C4-type zinc-finger motif lies at 59-74 (CEICGNMDTENMCRIC). One can recognise a Toprim domain in the interval 82–177 (SIIAIVETVA…KISRLASGIP (96 aa)).

Belongs to the RecR family.

Its function is as follows. May play a role in DNA repair. It seems to be involved in an RecBC-independent recombinational process of DNA repair. It may act with RecF and RecO. The sequence is that of Recombination protein RecR from Rickettsia conorii (strain ATCC VR-613 / Malish 7).